The primary structure comprises 352 residues: MYQNKSLIFKNPPIGWPKPDVDFGVECRPIDINGDIPLGGVILKNCYVSLDPYQRGRMRAPTVDSYSPPFTIGDPMEGHVISRVIRSASTKLQPGDFVSGVGPIQEFSVLSAGVVDGFTRIENPYNLNLEIFLGPLGMPGLTAYSSFYEIGKPKKGETIFISAASGAVGQLVGQLAKREGLYVIGSVGDDEKVEFITKGLGFDVGFNYKKEVIGEALMRVAPEGIDIYFDNVGGQTLESALYAMRPRGRIVVSGMISQYNLQPSELYGVKNLFMVITNRITIQGFIVTDSDMGPKYSAEHLKNVSQWIYDGSLKPKIHVDTGMDHACQSFINMLKGRKIGKAVLQIADLNGD.

NADP(+)-binding positions include 166–169, Lys192, Tyr208, Asn231, and 285–287; these read GAVG and FIV.

It belongs to the NADP-dependent oxidoreductase L4BD family.

It functions in the pathway mycotoxin biosynthesis. Functionally, NADP-dependent oxidoreductase; part of the Tox1B locus, one of the 2 loci that mediate the biosynthesis of T-toxin, a family of linear polyketides 37 to 45 carbons in length, of which the major component is 41 carbons, and which leads to high virulence to maize. One of the PKSs (PKS1 or PKS2) could synthesize a precursor, used subsequently by the other PKS as starter unit, to add additional carbons. Variability in the length of the final carbon backbone C35-47 could be achieved by varying the number of condensation cycles, or use of different starter or extender units or might be due to decarboxylation of the penultimate product, catalyzed by DEC1. Additional proteins are required for the biosynthesis of T-toxin, including oxidoreductases RED1, RED2, RED3, LAM1 and OXI1, as well as esterase TOX9. The protein is NADP-dependent oxidoreductase RED1 of Cochliobolus heterostrophus (strain C4 / ATCC 48331 / race T) (Southern corn leaf blight fungus).